The chain runs to 327 residues: Fructose import binding protein FruE (327 aa).

The first 22 residues, 1–22, serve as a signal peptide directing secretion; that stretch reads MKNWKKAIALVASAAALVSVAA. Cys-23 carries N-palmitoyl cysteine lipidation. Cys-23 carries S-diacylglycerol cysteine lipidation.

The protein belongs to the bacterial solute-binding protein 2 family. The complex is composed of an ATP-binding protein (FruK), two transmembrane proteins (FruF and FruG) and a solute-binding protein (FruE).

Its subcellular location is the cell membrane. In terms of biological role, part of the high-affinity ABC transporter complex FruEKFG involved in fructose uptake. Can also transport ribose and xylose, with lower affinity. Binds fructose, ribose and xylose, with fructose as the preferred substrate. In Bifidobacterium longum (strain NCC 2705), this protein is Fructose import binding protein FruE.